Reading from the N-terminus, the 198-residue chain is MAADISESSGADCNGDPRNSAKLDADYPLRVLYCGVCSLPTEYCEYMPDVAKCRQWLEKNFPNEFAKLTVENSPKQEAGISEGQGTAGEEEEKKKQKRGGRGQIKQKKKTVPQKVTIAKIPRAKKKYVTRVCGLATFEIDLKEAQRFFAQKFSCGASVTGEDEIIIQGDFTDDIIDVIQEKWPEVVDDSIEDLGEVKK.

Polar residues predominate over residues 1–11; the sequence is MAADISESSGA. Disordered stretches follow at residues 1 to 20 and 72 to 110; these read MAADISESSGADCNGDPRNS and NSPKQEAGISEGQGTAGEEEEKKKQKRGGRGQIKQKKKT. Position 2 is an N-acetylalanine (A2). Residues S20 and S73 each carry the phosphoserine modification. T86 carries the phosphothreonine modification. The segment covering 95-110 has biased composition (basic residues); the sequence is KQKRGGRGQIKQKKKT. The region spanning 115-182 is the SUI1 domain; it reads VTIAKIPRAK…DIIDVIQEKW (68 aa). S189 bears the Phosphoserine mark.

Belongs to the DENR family. As to quaternary structure, interacts with MCTS1 (via PUA domain); the complex regulates translation reinitiation.

It localises to the cytoplasm. Translation regulator forming a complex with MCTS1 to promote translation reinitiation. Translation reinitiation is the process where the small ribosomal subunit remains attached to the mRNA following termination of translation of a regulatory upstream ORF (uORF), and resume scanning on the same mRNA molecule to initiate translation of a downstream ORF, usually the main ORF (mORF). The MCTS1/DENR complex is pivotal to two linked mechanisms essential for translation reinitiation. Firstly, the dissociation of deacylated tRNAs from post-termination 40S ribosomal complexes during ribosome recycling. Secondly, the recruitment in an EIF2-independent manner of aminoacylated initiator tRNA to P site of 40S ribosomes for a new round of translation. This regulatory mechanism governs the translation of more than 150 genes which translation reinitiation is MCTS1/DENR complex-dependent. The protein is Density-regulated protein (DENR) of Pongo abelii (Sumatran orangutan).